The chain runs to 340 residues: MAITVYYDKDCDLNLIKSKKVAIIGFGSQGHAHAMNLRDNGVNVTIGLREGSVSAVKAKNAGFEVMSVSEASKIADVIMILAPDEIQADIFNVEIKPNLSEGKAIAFAHGFNIHYGQIVVPKGVDVIMIAPKAPGHTVRNEFTLGGGTPCLIAIHQDESKNAKNLALSYASAIGGGRTGIIETTFKAETETDLFGEQAVLCGGLSALIQAGFETLVEAGYEPEMAYFECLHEMKLIVDLIYQGGIADMRYSISNTAEYGDYITGPKIITEETKKAMKGVLKDIQNGVFAKDFILERRAGFARMHAERKNMNDSLIEKTGRNLRAMMPWISAKKLVDKDKN.

Residues 1 to 183 form the KARI N-terminal Rossmann domain; that stretch reads MAITVYYDKD…GGGRTGIIET (183 aa). NADP(+) is bound by residues 26–29, Arg49, Ser52, Ser54, and 84–87; these read FGSQ and DEIQ. The active site involves His109. Gly135 lines the NADP(+) pocket. The region spanning 184 to 329 is the KARI C-terminal knotted domain; the sequence is TFKAETETDL…RNLRAMMPWI (146 aa). Asp192, Glu196, Glu228, and Glu232 together coordinate Mg(2+). Ser253 is a substrate binding site.

It belongs to the ketol-acid reductoisomerase family. Requires Mg(2+) as cofactor.

The enzyme catalyses (2R)-2,3-dihydroxy-3-methylbutanoate + NADP(+) = (2S)-2-acetolactate + NADPH + H(+). It carries out the reaction (2R,3R)-2,3-dihydroxy-3-methylpentanoate + NADP(+) = (S)-2-ethyl-2-hydroxy-3-oxobutanoate + NADPH + H(+). It functions in the pathway amino-acid biosynthesis; L-isoleucine biosynthesis; L-isoleucine from 2-oxobutanoate: step 2/4. Its pathway is amino-acid biosynthesis; L-valine biosynthesis; L-valine from pyruvate: step 2/4. In terms of biological role, involved in the biosynthesis of branched-chain amino acids (BCAA). Catalyzes an alkyl-migration followed by a ketol-acid reduction of (S)-2-acetolactate (S2AL) to yield (R)-2,3-dihydroxy-isovalerate. In the isomerase reaction, S2AL is rearranged via a Mg-dependent methyl migration to produce 3-hydroxy-3-methyl-2-ketobutyrate (HMKB). In the reductase reaction, this 2-ketoacid undergoes a metal-dependent reduction by NADPH to yield (R)-2,3-dihydroxy-isovalerate. The sequence is that of Ketol-acid reductoisomerase (NADP(+)) from Campylobacter jejuni (strain RM1221).